A 396-amino-acid polypeptide reads, in one-letter code: Phosphoglycerate kinase (396 aa).

Residues 24–26 (DFN), R39, 62–65 (HLGR), R120, and R153 each bind substrate. ATP is bound by residues K203, G294, E325, and 352–355 (GGDS).

Belongs to the phosphoglycerate kinase family. As to quaternary structure, monomer.

It is found in the cytoplasm. It catalyses the reaction (2R)-3-phosphoglycerate + ATP = (2R)-3-phospho-glyceroyl phosphate + ADP. It participates in carbohydrate degradation; glycolysis; pyruvate from D-glyceraldehyde 3-phosphate: step 2/5. The protein is Phosphoglycerate kinase of Dictyoglomus turgidum (strain DSM 6724 / Z-1310).